The chain runs to 428 residues: C4-dicarboxylate transport protein (428 aa).

8 helical membrane passes run 8-28 (SLYF…HFYP), 44-64 (LIKM…IAGM), 76-96 (VALL…LIIV), 142-162 (IGAF…LFGF), 184-206 (VIFG…AMAF), 222-242 (LIIC…GSIA), 326-346 (IVHQ…AAGV), and 352-372 (IVLA…LALI).

Belongs to the dicarboxylate/amino acid:cation symporter (DAACS) (TC 2.A.23) family.

It is found in the cell inner membrane. Responsible for the transport of dicarboxylates such as succinate, fumarate, and malate from the periplasm across the membrane. In Shigella flexneri, this protein is C4-dicarboxylate transport protein.